We begin with the raw amino-acid sequence, 277 residues long: R-spondin-3 (277 aa).

Residues 1-21 form the signal peptide; it reads MHLRLISCFFIILNFMEYIGS. FU repeat units follow at residues 35–86 and 92–135; these read PNVS…GYYG and INKC…GLEA. An N-linked (GlcNAc...) asparagine glycan is attached at Asn-36. 11 cysteine pairs are disulfide-bonded: Cys-41–Cys-48, Cys-45–Cys-54, Cys-57–Cys-76, Cys-80–Cys-95, Cys-98–Cys-105, Cys-102–Cys-111, Cys-114–Cys-125, Cys-129–Cys-142, Cys-148–Cys-190, Cys-159–Cys-166, and Cys-199–Cys-206. The TSP type-1 domain maps to 147–207; that stretch reads HCEASEWSPW…TCIVQRKKCS (61 aa). The disordered stretch occupies residues 210–277; sequence ERGKKGRERK…QKSVSVSTVH (68 aa). Residues 213–223 show a composition bias toward basic residues; it reads KKGRERKRKKL. Over residues 232 to 245 the composition is skewed to low complexity; that stretch reads SSSSDSKGLESSIE.

Belongs to the R-spondin family. Interacts with the extracellular domain of FZD8 and LRP6. It however does not form a ternary complex with FZD8 and LRP6. Interacts with WNT1. Binds heparin. Interacts with LGR4, LGR5 and LGR6. As to expression, highly expressed in endothelial cells.

It localises to the secreted. Activator of the canonical Wnt signaling pathway by acting as a ligand for LGR4-6 receptors, which acts as a key regulator of angiogenesis. Upon binding to LGR4-6 (LGR4, LGR5 or LGR6), LGR4-6 associate with phosphorylated LRP6 and frizzled receptors that are activated by extracellular Wnt receptors, triggering the canonical Wnt signaling pathway to increase expression of target genes. Also regulates the canonical Wnt/beta-catenin-dependent pathway and non-canonical Wnt signaling by acting as an inhibitor of ZNRF3, an important regulator of the Wnt signaling pathway. Acts as a ligand for frizzled FZD8 and LRP6. May negatively regulate the TGF-beta pathway. Acts as a key regulator of angiogenesis by controlling vascular stability and pruning: acts by activating the non-canonical Wnt signaling pathway in endothelial cells. Can also amplify Wnt signaling pathway independently of LGR4-6 receptors, possibly by acting as a direct antagonistic ligand to RNF43 and ZNRF3. The protein is R-spondin-3 (Rspo3) of Mus musculus (Mouse).